An 801-amino-acid polypeptide reads, in one-letter code: Phosphatidylinositol 4-kinase beta (801 aa).

Disordered stretches follow at residues 1 to 29 (MGDT…GGSL), 101 to 121 (EDEM…RRRQ), and 250 to 304 (RKRE…EDEP). Gly-2 is subject to N-acetylglycine. Positions 2 to 68 (GDTAVEPAPL…VRLLHGAVAV (67 aa)) are interaction with ACBD3. The region spanning 29-242 (LLSVITEGVG…GTKLRKLILS (214 aa)) is the PIK helical domain. Phosphoserine is present on Ser-258. Polar residues predominate over residues 259-268 (PALNTGLSPS). Thr-263 carries the post-translational modification Phosphothreonine. Phosphoserine is present on residues Ser-266, Ser-275, Ser-277, Ser-284, Ser-294, and Ser-413. A compositionally biased stretch (low complexity) spans 278 to 294 (DATASISLSSSLKRTAS). Residue Thr-423 is modified to Phosphothreonine. Position 496 is a phosphoserine (Ser-496). A phosphothreonine mark is found at Thr-502 and Thr-504. A PI3K/PI4K catalytic domain is found at 520-786 (EPWQEKVRRI…MVDGSMRSIT (267 aa)). The segment at 526–532 (VRRIREG) is G-loop. Positions 653–661 (QVKDRHNGN) are catalytic loop. The interval 672–696 (HIDFGFILSSSPRNLGFETSAFKLT) is activation loop.

The protein belongs to the PI3/PI4-kinase family. Type III PI4K subfamily. In terms of assembly, interacts with ARF1 and ARF3 in the Golgi complex, but not with ARF4, ARF5 or ARF6. Interacts with NCS1/FREQ in a calcium-independent manner. Interacts with CALN1/CABP8 and CALN2/CABP7; in a calcium-dependent manner; this interaction competes with NCS1/FREQ binding. Interacts with ACBD3. Interacts with ARMH3, YWHAB, YWHAE, YWHAG, YWHAH, YWHAQ, YWHAZ and SFN. Interacts with GGA2 (via VHS domain); the interaction is important for PI4KB location at the Golgi apparatus membrane. Interacts with ATG9A. Mg(2+) is required as a cofactor. The cofactor is Mn(2+).

It localises to the endomembrane system. Its subcellular location is the mitochondrion outer membrane. The protein localises to the rough endoplasmic reticulum membrane. The protein resides in the golgi apparatus. It is found in the golgi apparatus membrane. It carries out the reaction a 1,2-diacyl-sn-glycero-3-phospho-(1D-myo-inositol) + ATP = a 1,2-diacyl-sn-glycero-3-phospho-(1D-myo-inositol 4-phosphate) + ADP + H(+). Its activity is regulated as follows. Inhibited by wortmannin. Increased kinase activity upon interaction with NCS1/FREQ. Its function is as follows. Phosphorylates phosphatidylinositol (PI) in the first committed step in the production of the second messenger inositol-1,4,5,-trisphosphate (PIP). May regulate Golgi disintegration/reorganization during mitosis, possibly via its phosphorylation. Involved in Golgi-to-plasma membrane trafficking. May play an important role in the inner ear development. The polypeptide is Phosphatidylinositol 4-kinase beta (PI4KB) (Sorex araneus (Eurasian common shrew)).